Consider the following 251-residue polypeptide: DNA polymerase sliding clamp 2 (251 aa).

The protein belongs to the PCNA family. Heterotrimer. The subunits circularize to form a toroid; DNA passes through its center. Replication factor C (RFC) is required to load the toroid on the DNA.

Functionally, sliding clamp subunit that acts as a moving platform for DNA processing. Responsible for tethering the catalytic subunit of DNA polymerase and other proteins to DNA during high-speed replication. The chain is DNA polymerase sliding clamp 2 from Aeropyrum pernix (strain ATCC 700893 / DSM 11879 / JCM 9820 / NBRC 100138 / K1).